A 115-amino-acid chain; its full sequence is Large ribosomal subunit protein bL20 (115 aa).

This sequence belongs to the bacterial ribosomal protein bL20 family.

Functionally, binds directly to 23S ribosomal RNA and is necessary for the in vitro assembly process of the 50S ribosomal subunit. It is not involved in the protein synthesizing functions of that subunit. The chain is Large ribosomal subunit protein bL20 from Borrelia garinii subsp. bavariensis (strain ATCC BAA-2496 / DSM 23469 / PBi) (Borreliella bavariensis).